A 237-amino-acid chain; its full sequence is Pyridoxine 5'-phosphate synthase (237 aa).

Positions 7 and 18 each coordinate 3-amino-2-oxopropyl phosphate. Residue H43 is the Proton acceptor of the active site. The 1-deoxy-D-xylulose 5-phosphate site is built by R45 and H50. Catalysis depends on E70, which acts as the Proton acceptor. T100 provides a ligand contact to 1-deoxy-D-xylulose 5-phosphate. Catalysis depends on H190, which acts as the Proton donor. Residues D191 and 213 to 214 (GH) contribute to the 3-amino-2-oxopropyl phosphate site.

Belongs to the PNP synthase family. As to quaternary structure, homooctamer; tetramer of dimers.

The protein localises to the cytoplasm. It catalyses the reaction 3-amino-2-oxopropyl phosphate + 1-deoxy-D-xylulose 5-phosphate = pyridoxine 5'-phosphate + phosphate + 2 H2O + H(+). The protein operates within cofactor biosynthesis; pyridoxine 5'-phosphate biosynthesis; pyridoxine 5'-phosphate from D-erythrose 4-phosphate: step 5/5. Its function is as follows. Catalyzes the complicated ring closure reaction between the two acyclic compounds 1-deoxy-D-xylulose-5-phosphate (DXP) and 3-amino-2-oxopropyl phosphate (1-amino-acetone-3-phosphate or AAP) to form pyridoxine 5'-phosphate (PNP) and inorganic phosphate. This is Pyridoxine 5'-phosphate synthase from Bacteroides fragilis (strain ATCC 25285 / DSM 2151 / CCUG 4856 / JCM 11019 / LMG 10263 / NCTC 9343 / Onslow / VPI 2553 / EN-2).